We begin with the raw amino-acid sequence, 318 residues long: Ankyrin repeat and SOCS box protein 7 (318 aa).

ANK repeat units lie at residues 13 to 42, 46 to 75, 80 to 109, 116 to 145, 149 to 178, 180 to 208, and 213 to 242; these read QEEL…SPNG, NGWT…DPTV, GGFT…RSDI, DGWT…EVDP, KGTT…NIDI, NGFL…DTDL, and DGQT…DTNT. Residues 265–318 enclose the SOCS box domain; that stretch reads LDFLQEVTRQPRNLQDLCRIKIRQCIGLQNLKLLDELPIAKVMKDYLKHKFDDI.

The protein belongs to the ankyrin SOCS box (ASB) family. In terms of assembly, interacts with CUL5. Interacts with RNF7. Interacts with PSRC1.

The protein operates within protein modification; protein ubiquitination. Its function is as follows. Probable substrate-recognition component of a SCF-like ECS (Elongin-Cullin-SOCS-box protein) E3 ubiquitin-protein ligase complex which mediates the ubiquitination and subsequent proteasomal degradation of target proteins. Plays a role in spindle dynamics and genome integrity by targeting the mitotic progression protein PSRC1 for proteasomal degradation in a cell cycle-dependent manner. Also participates in meiosis by mediating the proper attachment between kinetochores and microtubules. The chain is Ankyrin repeat and SOCS box protein 7 (ASB7) from Macaca fascicularis (Crab-eating macaque).